We begin with the raw amino-acid sequence, 430 residues long: Trigger factor (430 aa).

Positions 157–242 (GDLVALETWS…AVEVSEPVLP (86 aa)) constitute a PPIase FKBP-type domain.

Belongs to the FKBP-type PPIase family. Tig subfamily.

The protein localises to the cytoplasm. It carries out the reaction [protein]-peptidylproline (omega=180) = [protein]-peptidylproline (omega=0). Involved in protein export. Acts as a chaperone by maintaining the newly synthesized protein in an open conformation. Functions as a peptidyl-prolyl cis-trans isomerase. The sequence is that of Trigger factor from Xanthomonas campestris pv. campestris (strain B100).